The sequence spans 442 residues: Septin-8 (442 aa).

Position 2 is an N-acetylalanine (Ala-2). Residue Ser-10 is modified to Phosphoserine. The Septin-type G domain occupies 41 to 307 (QGFSFNILCV…ELYRRCKLEE (267 aa)). Positions 51-58 (GETGIGKS) are G1 motif. GTP is bound by residues 51–58 (GETGIGKS), Gly-106, 187–195 (KADTISKSE), Gly-241, and Arg-256. Residues 103–106 (DAVG) form a G3 motif region. The G4 motif stretch occupies residues 186-189 (AKAD). The stretch at 322-410 (LQETYEAKRK…RKAAVEALQS (89 aa)) forms a coiled coil. The segment covering 377–391 (HQEEKRKVEEKRREL) has biased composition (basic and acidic residues). The disordered stretch occupies residues 377 to 442 (HQEEKRKVEE…WSSIYSVTIP (66 aa)). Composition is skewed to polar residues over residues 408–420 (LQSQ…SQQP) and 432–442 (GWSSIYSVTIP).

Belongs to the TRAFAC class TrmE-Era-EngA-EngB-Septin-like GTPase superfamily. Septin GTPase family. In terms of assembly, septins polymerize into heterooligomeric protein complexes that form filaments, and can associate with cellular membranes, actin filaments and microtubules. GTPase activity is required for filament formation. Interacts with CDK14, SEPTIN4, SEPTIN5 and SEPTIN7. Interacts with VAMP2; the interaction inhibits interaction of VAMP2 with SYP. Interacts with STX1A.

It is found in the cytoplasm. It localises to the cytoskeleton. Its subcellular location is the synapse. The protein localises to the cell projection. The protein resides in the axon. It is found in the cytoplasmic vesicle. It localises to the secretory vesicle. Its subcellular location is the synaptic vesicle membrane. The protein localises to the presynapse. Functionally, filament-forming cytoskeletal GTPase. May play a role in platelet secretion. Seems to participate in the process of SNARE complex formation in synaptic vesicles. In Callithrix jacchus (White-tufted-ear marmoset), this protein is Septin-8.